The following is a 113-amino-acid chain: Cell cycle control protein 50C (113 aa).

Over 1–34 the chain is Cytoplasmic; the sequence is MEERAQHCLSRLLDNSALKQQELPIHRLYFTARR. Residues 35–55 form a helical membrane-spanning segment; the sequence is VLFVFFATGIFCLCMGIILIL. Over 56–113 the chain is Extracellular; sequence SARSTQEIEINYTRICANCAKLRENASNFDKECTCSIPFYLSGKMMVGEIQETRLTLH. Asn-66 carries an N-linked (GlcNAc...) asparagine glycan.

It belongs to the CDC50/LEM3 family. In terms of tissue distribution, specifically expressed in testis.

The protein localises to the membrane. The sequence is that of Cell cycle control protein 50C from Homo sapiens (Human).